A 317-amino-acid chain; its full sequence is Protease HtpX homolog (317 aa).

2 helical membrane-spanning segments follow: residues 14–34 (LMGIAIFAIGFGIIYAILYYI) and 41–61 (IALLMVLLPIFIIMDIVQWLF). His-146 serves as a coordination point for Zn(2+). Residue Glu-147 is part of the active site. Position 150 (His-150) interacts with Zn(2+). The next 2 helical transmembrane spans lie at 158–178 (MLLAIGLIPTLIFYFGYTLLF) and 189–209 (IVLLAIIAMAASFLFRFLILA). Glu-215 is a binding site for Zn(2+).

The protein belongs to the peptidase M48B family. The cofactor is Zn(2+).

The protein resides in the cell membrane. The polypeptide is Protease HtpX homolog (Thermoplasma acidophilum (strain ATCC 25905 / DSM 1728 / JCM 9062 / NBRC 15155 / AMRC-C165)).